A 277-amino-acid polypeptide reads, in one-letter code: Large ribosomal subunit protein uL2 (277 aa).

2 disordered regions span residues 35-60 (EKQS…GHKQ) and 225-277 (MNPV…ANKR). Residues 43–53 (RNNNGHITTRH) are compositionally biased toward polar residues.

This sequence belongs to the universal ribosomal protein uL2 family. As to quaternary structure, part of the 50S ribosomal subunit. Forms a bridge to the 30S subunit in the 70S ribosome.

In terms of biological role, one of the primary rRNA binding proteins. Required for association of the 30S and 50S subunits to form the 70S ribosome, for tRNA binding and peptide bond formation. It has been suggested to have peptidyltransferase activity; this is somewhat controversial. Makes several contacts with the 16S rRNA in the 70S ribosome. The sequence is that of Large ribosomal subunit protein uL2 from Methylobacillus flagellatus (strain ATCC 51484 / DSM 6875 / VKM B-1610 / KT).